The primary structure comprises 489 residues: UDP-N-acetylmuramoyl-L-alanyl-D-glutamate--2,6-diaminopimelate ligase (489 aa).

Residue serine 30 participates in UDP-N-acetyl-alpha-D-muramoyl-L-alanyl-D-glutamate binding. 113 to 119 (GTNGKTS) contributes to the ATP binding site. Residues 155–156 (TT), serine 182, glutamine 188, and arginine 190 each bind UDP-N-acetyl-alpha-D-muramoyl-L-alanyl-D-glutamate. An N6-carboxylysine modification is found at lysine 222. Meso-2,6-diaminopimelate-binding positions include arginine 388, 412 to 415 (DNPR), glycine 463, and glutamate 467. A Meso-diaminopimelate recognition motif motif is present at residues 412-415 (DNPR).

It belongs to the MurCDEF family. MurE subfamily. Mg(2+) serves as cofactor. Carboxylation is probably crucial for Mg(2+) binding and, consequently, for the gamma-phosphate positioning of ATP.

Its subcellular location is the cytoplasm. The catalysed reaction is UDP-N-acetyl-alpha-D-muramoyl-L-alanyl-D-glutamate + meso-2,6-diaminopimelate + ATP = UDP-N-acetyl-alpha-D-muramoyl-L-alanyl-gamma-D-glutamyl-meso-2,6-diaminopimelate + ADP + phosphate + H(+). It functions in the pathway cell wall biogenesis; peptidoglycan biosynthesis. Its function is as follows. Catalyzes the addition of meso-diaminopimelic acid to the nucleotide precursor UDP-N-acetylmuramoyl-L-alanyl-D-glutamate (UMAG) in the biosynthesis of bacterial cell-wall peptidoglycan. The protein is UDP-N-acetylmuramoyl-L-alanyl-D-glutamate--2,6-diaminopimelate ligase of Coxiella burnetii (strain RSA 493 / Nine Mile phase I).